The chain runs to 351 residues: Prostaglandin reductase 2 (351 aa).

A substrate-binding site is contributed by 99–100 (FY). NADP(+) is bound by residues 165–168 (GACG), K192, Y208, N231, 253–259 (CGQISQY), 287–289 (FMV), and N337. Substrate is bound at residue 288 to 290 (MVL).

This sequence belongs to the NADP-dependent oxidoreductase L4BD family. Monomer.

Its subcellular location is the cytoplasm. It catalyses the reaction 13,14-dihydro-15-oxo-prostaglandin E2 + NAD(+) = 15-oxoprostaglandin E2 + NADH + H(+). The catalysed reaction is 13,14-dihydro-15-oxo-prostaglandin E2 + NADP(+) = 15-oxoprostaglandin E2 + NADPH + H(+). The enzyme catalyses 13,14-dihydro-15-oxo-PGF2alpha + NADP(+) = 15-oxoprostaglandin F2alpha + NADPH + H(+). It carries out the reaction 13,14-dihydro-15-oxo-prostaglandin E1 + NADP(+) = 15-oxoprostaglandin E1 + NADPH + H(+). It catalyses the reaction 13,14-dihydro-15-oxo-prostaglandin F1alpha + NADP(+) = 15-oxoprostaglandin F1alpha + NADPH + H(+). Functions as 15-oxo-prostaglandin 13-reductase and acts on 15-keto-PGE1, 15-keto-PGE2, 15-keto-PGE1-alpha and 15-keto-PGE2-alpha with highest activity towards 15-keto-PGE2. Overexpression represses transcriptional activity of PPARG and inhibits adipocyte differentiation. The protein is Prostaglandin reductase 2 of Rattus norvegicus (Rat).